The sequence spans 377 residues: Succinyl-diaminopimelate desuccinylase (377 aa).

Histidine 66 contributes to the Zn(2+) binding site. Aspartate 68 is an active-site residue. Zn(2+) is bound at residue aspartate 99. Glutamate 133 acts as the Proton acceptor in catalysis. Residues glutamate 134, glutamate 162, and histidine 348 each coordinate Zn(2+).

It belongs to the peptidase M20A family. DapE subfamily. As to quaternary structure, homodimer. Requires Zn(2+) as cofactor. The cofactor is Co(2+).

It carries out the reaction N-succinyl-(2S,6S)-2,6-diaminopimelate + H2O = (2S,6S)-2,6-diaminopimelate + succinate. It functions in the pathway amino-acid biosynthesis; L-lysine biosynthesis via DAP pathway; LL-2,6-diaminopimelate from (S)-tetrahydrodipicolinate (succinylase route): step 3/3. Catalyzes the hydrolysis of N-succinyl-L,L-diaminopimelic acid (SDAP), forming succinate and LL-2,6-diaminopimelate (DAP), an intermediate involved in the bacterial biosynthesis of lysine and meso-diaminopimelic acid, an essential component of bacterial cell walls. This is Succinyl-diaminopimelate desuccinylase from Histophilus somni (strain 129Pt) (Haemophilus somnus).